Consider the following 144-residue polypeptide: D-aminoacyl-tRNA deacylase (144 aa).

Residues 136–137 carry the Gly-cisPro motif, important for rejection of L-amino acids motif; that stretch reads GP.

It belongs to the DTD family. Homodimer.

It localises to the cytoplasm. The catalysed reaction is glycyl-tRNA(Ala) + H2O = tRNA(Ala) + glycine + H(+). The enzyme catalyses a D-aminoacyl-tRNA + H2O = a tRNA + a D-alpha-amino acid + H(+). An aminoacyl-tRNA editing enzyme that deacylates mischarged D-aminoacyl-tRNAs. Also deacylates mischarged glycyl-tRNA(Ala), protecting cells against glycine mischarging by AlaRS. Acts via tRNA-based rather than protein-based catalysis; rejects L-amino acids rather than detecting D-amino acids in the active site. By recycling D-aminoacyl-tRNA to D-amino acids and free tRNA molecules, this enzyme counteracts the toxicity associated with the formation of D-aminoacyl-tRNA entities in vivo and helps enforce protein L-homochirality. In Glaesserella parasuis serovar 5 (strain SH0165) (Haemophilus parasuis), this protein is D-aminoacyl-tRNA deacylase.